The chain runs to 829 residues: Probable beta-glucosidase H (829 aa).

N-linked (GlcNAc...) asparagine glycosylation is present at Asn13. Asp225 is an active-site residue. 6 N-linked (GlcNAc...) asparagine glycosylation sites follow: Asn304, Asn473, Asn602, Asn627, Asn664, and Asn749. The PA14 domain maps to 389-548 (RMLSNAVIHF…DPEQMVANAV (160 aa)).

Belongs to the glycosyl hydrolase 3 family.

Its subcellular location is the secreted. It carries out the reaction Hydrolysis of terminal, non-reducing beta-D-glucosyl residues with release of beta-D-glucose.. The protein operates within glycan metabolism; cellulose degradation. In terms of biological role, beta-glucosidases are one of a number of cellulolytic enzymes involved in the degradation of cellulosic biomass. Catalyzes the last step releasing glucose from the inhibitory cellobiose. In Aspergillus fumigatus (strain CBS 144.89 / FGSC A1163 / CEA10) (Neosartorya fumigata), this protein is Probable beta-glucosidase H (bglH).